The primary structure comprises 201 residues: Glutathione peroxidase 1 (201 aa).

2 positions are modified to phosphoserine: S7 and S32. U47 is an active-site residue. Position 47 (U47) is a non-standard amino acid, selenocysteine. An N6-acetyllysine; alternate mark is found at K62, K86, and K112. Residues K62, K86, and K112 each carry the N6-succinyllysine; alternate modification. Residue K119 is modified to N6-acetyllysine. An N6-acetyllysine; alternate modification is found at K146. K146 is modified (N6-succinyllysine; alternate). S195 is modified (phosphoserine).

This sequence belongs to the glutathione peroxidase family. In terms of assembly, homotetramer. Interacts with MIEN1. Post-translationally, during periods of oxidative stress, Sec-47 may react with a superoxide radical, irreversibly lose hydroselenide and be converted to dehydroalanine. As to expression, expressed in liver, kidney, lung, brain and heart.

The protein localises to the cytoplasm. It is found in the mitochondrion. It carries out the reaction 2 glutathione + H2O2 = glutathione disulfide + 2 H2O. The enzyme catalyses a hydroperoxy polyunsaturated fatty acid + 2 glutathione = a hydroxy polyunsaturated fatty acid + glutathione disulfide + H2O. It catalyses the reaction tert-butyl hydroperoxide + 2 glutathione = tert-butanol + glutathione disulfide + H2O. The catalysed reaction is cumene hydroperoxide + 2 glutathione = 2-phenylpropan-2-ol + glutathione disulfide + H2O. It carries out the reaction (13S)-hydroperoxy-(9Z,11E)-octadecadienoate + 2 glutathione = (13S)-hydroxy-(9Z,11E)-octadecadienoate + glutathione disulfide + H2O. The enzyme catalyses (9S)-hydroperoxy-(10E,12Z)-octadecadienoate + 2 glutathione = (9S)-hydroxy-(10E,12Z)-octadecadienoate + glutathione disulfide + H2O. It catalyses the reaction (5S)-hydroperoxy-(6E,8Z,11Z,14Z)-eicosatetraenoate + 2 glutathione = (5S)-hydroxy-(6E,8Z,11Z,14Z)-eicosatetraenoate + glutathione disulfide + H2O. The catalysed reaction is (12S)-hydroperoxy-(5Z,8Z,10E,14Z)-eicosatetraenoate + 2 glutathione = (12S)-hydroxy-(5Z,8Z,10E,14Z)-eicosatetraenoate + glutathione disulfide + H2O. It carries out the reaction (12R)-hydroperoxy-(5Z,8Z,10E,14Z)-eicosatetraenoate + 2 glutathione = (12R)-hydroxy-(5Z,8Z,10E,14Z)-eicosatetraenoate + glutathione disulfide + H2O. The enzyme catalyses (15S)-hydroperoxy-(5Z,8Z,11Z,13E)-eicosatetraenoate + 2 glutathione = (15S)-hydroxy-(5Z,8Z,11Z,13E)-eicosatetraenoate + glutathione disulfide + H2O. It catalyses the reaction (5S)-hydroperoxy-(6E,8Z,11Z,14Z,17Z)-eicosapentaenoate + 2 glutathione = (5S)-hydroxy-(6E,8Z,11Z,14Z,17Z)-eicosapentaenoate + glutathione disulfide + H2O. The catalysed reaction is (12S)-hydroperoxy-(5Z,8Z,10E,14Z,17Z)-eicosapentaenoate + 2 glutathione = (12S)-hydroxy-(5Z,8Z,10E,14Z,17Z)-eicosapentaenoate + glutathione disulfide + H2O. It carries out the reaction (15S)-hydroperoxy-(5Z,8Z,11Z,13E,17Z)-eicosapentaenoate + 2 glutathione = (15S)-hydroxy-(5Z,8Z,11Z,13E,17Z)-eicosapentaenoate + glutathione disulfide + H2O. The enzyme catalyses (15S)-hydroperoxy-(11Z,13E)-eicosadienoate + 2 glutathione = (15S)-hydroxy-(11Z,13E)-eicosadienoate + glutathione disulfide + H2O. It catalyses the reaction (17S)-hydroperoxy-(4Z,7Z,10Z,13Z,15E,19Z)-docosahexaenoate + 2 glutathione = (17S)-hydroxy-(4Z,7Z,10Z,13Z,15E,19Z)-docosahexaenoate + glutathione disulfide + H2O. In terms of biological role, catalyzes the reduction of hydroperoxides in a glutathione-dependent manner thus regulating cellular redox homeostasis. Can reduce small soluble hydroperoxides such as H2O2, cumene hydroperoxide and tert-butyl hydroperoxide, as well as several fatty acid-derived hydroperoxides. In platelets catalyzes the reduction of 12-hydroperoxyeicosatetraenoic acid, the primary product of the arachidonate 12-lipoxygenase pathway. This is Glutathione peroxidase 1 from Mus musculus (Mouse).